The primary structure comprises 139 residues: D-ribose pyranase (139 aa).

H20 functions as the Proton donor in the catalytic mechanism. Substrate contacts are provided by residues D28, H106, and 128–130 (YAN).

The protein belongs to the RbsD / FucU family. RbsD subfamily. Homodecamer.

It localises to the cytoplasm. It carries out the reaction beta-D-ribopyranose = beta-D-ribofuranose. Its pathway is carbohydrate metabolism; D-ribose degradation; D-ribose 5-phosphate from beta-D-ribopyranose: step 1/2. In terms of biological role, catalyzes the interconversion of beta-pyran and beta-furan forms of D-ribose. The protein is D-ribose pyranase of Aeromonas hydrophila subsp. hydrophila (strain ATCC 7966 / DSM 30187 / BCRC 13018 / CCUG 14551 / JCM 1027 / KCTC 2358 / NCIMB 9240 / NCTC 8049).